The following is a 304-amino-acid chain: Acetyl-coenzyme A carboxylase carboxyl transferase subunit beta (304 aa).

In terms of domain architecture, CoA carboxyltransferase N-terminal spans 23–292 (VWTKCDSCGQ…PNPEAPREGV (270 aa)). The Zn(2+) site is built by C27, C30, C46, and C49. The segment at 27 to 49 (CDSCGQVLYRAELERNLEVCPKC) adopts a C4-type zinc-finger fold. The segment at 284–304 (NPEAPREGVVVPPVPDQEPEA) is disordered. Positions 295-304 (PPVPDQEPEA) are enriched in pro residues.

Belongs to the AccD/PCCB family. In terms of assembly, acetyl-CoA carboxylase is a heterohexamer composed of biotin carboxyl carrier protein (AccB), biotin carboxylase (AccC) and two subunits each of ACCase subunit alpha (AccA) and ACCase subunit beta (AccD). Zn(2+) serves as cofactor.

It localises to the cytoplasm. The enzyme catalyses N(6)-carboxybiotinyl-L-lysyl-[protein] + acetyl-CoA = N(6)-biotinyl-L-lysyl-[protein] + malonyl-CoA. It functions in the pathway lipid metabolism; malonyl-CoA biosynthesis; malonyl-CoA from acetyl-CoA: step 1/1. Functionally, component of the acetyl coenzyme A carboxylase (ACC) complex. Biotin carboxylase (BC) catalyzes the carboxylation of biotin on its carrier protein (BCCP) and then the CO(2) group is transferred by the transcarboxylase to acetyl-CoA to form malonyl-CoA. This chain is Acetyl-coenzyme A carboxylase carboxyl transferase subunit beta, found in Escherichia coli O6:K15:H31 (strain 536 / UPEC).